We begin with the raw amino-acid sequence, 1170 residues long: Thrombospondin-1 (1170 aa).

A signal peptide spans 1 to 18; it reads MGLAWGLGVLLLLHACGS. A heparin-binding region spans residues 47 to 95; it reads RLVKGPDPSSPAFRIEDANLIPPVPDKKFQDLVDAVRAEKGFLLLASLR. The Laminin G-like domain occupies 65–270; that stretch reads NLIPPVPDKK…HKTKDLQAIC (206 aa). An intrachain disulfide couples cysteine 171 to cysteine 232. N-linked (GlcNAc...) asparagine glycans are attached at residues asparagine 248 and asparagine 360. The 58-residue stretch at 316 to 373 folds into the VWFC domain; sequence PLCYHNGVQYRTGDEWTVDSCTECRCQNSVTICKKVSCPIMPCSNATVPDGECCPRCW. TSP type-1 domains follow at residues 379-429, 435-490, and 492-547; these read DDGW…QECD, DGGW…DSCP, and NGGW…QDCP. 27 disulfide bridges follow: cysteine 391–cysteine 423, cysteine 395–cysteine 428, cysteine 406–cysteine 413, cysteine 447–cysteine 484, cysteine 451–cysteine 489, cysteine 462–cysteine 474, cysteine 504–cysteine 541, cysteine 508–cysteine 546, cysteine 519–cysteine 531, cysteine 551–cysteine 562, cysteine 556–cysteine 572, cysteine 575–cysteine 586, cysteine 592–cysteine 608, cysteine 599–cysteine 617, cysteine 620–cysteine 644, cysteine 650–cysteine 663, cysteine 657–cysteine 676, cysteine 678–cysteine 689, cysteine 705–cysteine 713, cysteine 718–cysteine 738, cysteine 754–cysteine 774, cysteine 777–cysteine 797, cysteine 813–cysteine 833, cysteine 836–cysteine 856, cysteine 874–cysteine 894, cysteine 910–cysteine 930, and cysteine 946–cysteine 1167. The region spanning 547–587 is the EGF-like 1 domain; sequence PIDGCLSNPCFAGVQCTSYPDGSWKCGACPPGYSGDGVECK. A glycan (O-linked (Xyl) serine) is linked at serine 553. An EGF-like 2 domain is found at 646–690; that stretch reads PRNPCTDGTHDCNKNAKCNYLGHYSDPMYRCECKPGYAGNGIICG. 8 TSP type-3 repeats span residues 691–726, 727–762, 763–785, 786–821, 822–844, 845–882, 883–918, and 919–954; these read EDTD…NSGQ, EDYD…NPAQ, YDYD…NPDQ, ADTD…NVDQ, KDTD…NPDQ, LDSD…NANQ, ADHD…NPDQ, and KDSD…DISE. N-linked (GlcNAc...) asparagine glycosylation is present at asparagine 708. Positions 839–944 are disordered; it reads EHNPDQLDSD…DQDKVPDIDD (106 aa). Composition is skewed to basic and acidic residues over residues 840 to 854, 883 to 894, and 917 to 941; these read HNPD…RIGD, ADHDKDGKGDAC, and DQKD…KVPD. The Cell attachment site motif lies at 926-928; that stretch reads RGD. A TSP C-terminal domain is found at 958–1170; the sequence is RRFQMIPLDP…SDLKYECRDS (213 aa). N-linked (GlcNAc...) asparagine glycans are attached at residues asparagine 1067 and asparagine 1085.

The protein belongs to the thrombospondin family. As to quaternary structure, homotrimer; disulfide-linked. Can bind to fibrinogen, fibronectin, laminin, type V collagen and integrins alpha-V/beta-1, alpha-V/beta-3 and alpha-IIb/beta-3. Binds heparin. Interacts (via the C-terminal domain) with CD47. Interacts (via the TSP type I repeats) with CD36; the interaction conveys an antiangiogenic effect. Interacts (via the TSP type I repeats) with HRG; the interaction blocks the antiangiogenic effect of THBS1 with CD36. Interacts with ATF6 (via lumenal domain). Interacts with FN1; this interaction is enhanced by TNFAIP6, which may act as a bridging molecule between FN1 and THBS1. Interacts with SIRPA; the interaction stimulates phosphorylation of SIRPA. In terms of tissue distribution, odontoblasts.

It localises to the secreted. The protein resides in the cell surface. The protein localises to the extracellular space. It is found in the extracellular matrix. Its subcellular location is the endoplasmic reticulum. It localises to the sarcoplasmic reticulum. Its function is as follows. Adhesive glycoprotein that mediates cell-to-cell and cell-to-matrix interactions. Multifunctional, involved in inflammation, angiogenesis, wound healing, reactive oxygen species (ROS) signaling, nitrous oxide (NO) signaling, apoptosis, senescence, aging, cellular self-renewal, stemness, and cardiovascular and metabolic homeostasis. Negatively modulates dendritic cell activation and cytokine release, as part of an autocrine feedback loop, contributing to the resolution of inflammation and immune homeostasis. Ligand for receptor CD47. Modulates nitrous oxide (NO) signaling via CD47, hence playing a role as a pressor agent, supporting blood pressure. Plays a role in endothelial cell senescence, acting via CD47, by increasing the abundance and activation of NADPH oxidase NOX1, and so generating excess ROS. Inhibits stem cell self-renewal, acting via CD47 signaling, probably by regulation of the stem cell transcription factors POU5F1/OCT4, SOX2, MYC/c-Myc and KLF4. Negatively modulates wound healing, acting via CD47. Ligand for receptor CD36. Involved in inducing apoptosis in podocytes in response to elevated free fatty acids, acting via CD36. Plays a role in suppressing angiogenesis, acting, depending on context, via CD36 or CD47. Promotes cellular senescence in a TP53-CDKN1A-RB1 signaling-dependent manner. Ligand for immunoglobulin-like cell surface receptor SIRPA. Involved in ROS signaling in non-phagocytic cells, stimulating NADPH oxidase-derived ROS production, acting via interaction with SIRPA. Plays a role in metabolic dysfunction in diet-induced obesity, perhaps acting by exacerbating adipose inflammatory activity; its effects may be mediated, at least in part, through enhanced adipocyte proliferation. Plays a role in ER stress response, via its interaction with the activating transcription factor 6 alpha (ATF6) which produces adaptive ER stress response factors. May be involved in age-related conditions, including metabolic dysregulation, during normal aging. The polypeptide is Thrombospondin-1 (THBS1) (Bos taurus (Bovine)).